A 436-amino-acid chain; its full sequence is MEEAETNTQVDSVPSNSVRSGAELSSKSKLRDSCHACARSKVRCPKQKPSCSRCEARGTTCQYFFSRRPGRRRETSKSPNPEKQIAIGSSHANNRNSPSFSSTRSTLPSPIASDSNSNFTQPQNSSITTVHNGPENSIESPCWEDFSCEFSDTDFVMPTIDTPFDLSPAYSGSVVQEMNDTAPFPLSSSRISMGTTPSGKSSISSYSQILPSITPTTTPVAHISSCRCLATALDLLKTLSLAGLADADSLVSAPIILAENKQSIESVNNLMACPLCSGDSFPLTIFSMIALKILERYAVAARTQHQGTRPQEAEGTVEIKLADIVISNNEDQTRLPSHSNIVCCDDKTQARAAAQLVLGELHHMQRLVNQLSSMIKRSAERDGRKLEILNGYNDSIDSGNSMLASFSASTLELVESDVRKSLRSLSTDIIKELRQH.

Residues 1 to 27 (MEEAETNTQVDSVPSNSVRSGAELSSK) show a composition bias toward polar residues. Residues 1–32 (MEEAETNTQVDSVPSNSVRSGAELSSKSKLRD) are disordered. The segment at residues 34–61 (CHACARSKVRCPKQKPSCSRCEARGTTC) is a DNA-binding region (zn(2)-C6 fungal-type). Positions 67 to 136 (RRPGRRRETS…ITTVHNGPEN (70 aa)) are disordered. The span at 90–136 (SHANNRNSPSFSSTRSTLPSPIASDSNSNFTQPQNSSITTVHNGPEN) shows a compositional bias: polar residues.

Its subcellular location is the nucleus. Its function is as follows. Transcriptional regulator; part of the gene cluster that mediates the biosynthesis of the dimeric xanthones cryptosporioptides. This is Transcriptional regulator dmxR14 from Cryptosporiopsis sp. (strain 8999).